Reading from the N-terminus, the 80-residue chain is Late cornified envelope protein 6A (80 aa).

The segment covering 1–10 (MSQQKQQSWK) has biased composition (polar residues). Disordered stretches follow at residues 1 to 21 (MSQQ…SPPQ) and 35 to 60 (GAPH…ARQK).

Belongs to the LCE family.

Functionally, precursors of the cornified envelope of the stratum corneum. This Homo sapiens (Human) protein is Late cornified envelope protein 6A (LCE6A).